A 147-amino-acid chain; its full sequence is 3-dehydroquinate dehydratase (147 aa).

Tyr24 acts as the Proton acceptor in catalysis. Residues Asn75, His81, and Asp88 each contribute to the substrate site. The active-site Proton donor is His101. Substrate-binding positions include 102–103 (IS) and Arg112.

The protein belongs to the type-II 3-dehydroquinase family. In terms of assembly, homododecamer.

The enzyme catalyses 3-dehydroquinate = 3-dehydroshikimate + H2O. The protein operates within metabolic intermediate biosynthesis; chorismate biosynthesis; chorismate from D-erythrose 4-phosphate and phosphoenolpyruvate: step 3/7. In terms of biological role, catalyzes a trans-dehydration via an enolate intermediate. The sequence is that of 3-dehydroquinate dehydratase from Cereibacter sphaeroides (strain ATCC 17029 / ATH 2.4.9) (Rhodobacter sphaeroides).